The chain runs to 445 residues: Glutamate--tRNA ligase 2 (445 aa).

Residues 10-20 (PSPTGRLHVGN) carry the 'HIGH' region motif. The 'KMSKS' region motif lies at 241–245 (ALSKR). Lys244 serves as a coordination point for ATP.

It belongs to the class-I aminoacyl-tRNA synthetase family. Glutamate--tRNA ligase type 1 subfamily. As to quaternary structure, monomer.

It localises to the cytoplasm. The catalysed reaction is tRNA(Glu) + L-glutamate + ATP = L-glutamyl-tRNA(Glu) + AMP + diphosphate. Catalyzes the attachment of glutamate to tRNA(Glu) in a two-step reaction: glutamate is first activated by ATP to form Glu-AMP and then transferred to the acceptor end of tRNA(Glu). The polypeptide is Glutamate--tRNA ligase 2 (Hyphomonas neptunium (strain ATCC 15444)).